Reading from the N-terminus, the 490-residue chain is Beta-glucosidase 42 (490 aa).

Residues glutamine 35, histidine 137, 182–183 (NE), tyrosine 317, and glutamate 388 each bind a beta-D-glucoside. The active-site Proton donor is glutamate 183. Catalysis depends on glutamate 388, which acts as the Nucleophile. A glycan (N-linked (GlcNAc...) asparagine) is linked at asparagine 420. A beta-D-glucoside-binding positions include tryptophan 437, 444–445 (EW), and phenylalanine 453.

The protein belongs to the glycosyl hydrolase 1 family. In terms of tissue distribution, expressed at low levels predominantly in root epidermal cells.

It catalyses the reaction Hydrolysis of terminal, non-reducing beta-D-glucosyl residues with release of beta-D-glucose.. Functionally, glucosidase that hydrolyzes scopolin and various beta-glucosides, cellooligosaccharides (mainly cellotriose) and laminarioligosaccharides. Can use p-nitrophenyl-beta-glucosides (pNP beta-Glc) and p-nitrophenyl-beta-D-fucosides (pNP beta-D-Fuc) as substrates, and, to a lower extent, beta-galactosides, beta-mannosides and beta-xylosides. Involved in the secretion of root-derived phenolics upon iron ions (Fe) depletion. Promotes disease resistance toward B.cinerea, H.arabidopsidis and P.syringae pv. tomato DC3000. Required during rhizobacteria-mediated (e.g. P.fluorescens WCS417r) broad-spectrum induced systemic resistance (ISR) against several pathogens. This Arabidopsis thaliana (Mouse-ear cress) protein is Beta-glucosidase 42.